Consider the following 87-residue polypeptide: Small ribosomal subunit protein bS20 (87 aa).

The protein belongs to the bacterial ribosomal protein bS20 family.

In terms of biological role, binds directly to 16S ribosomal RNA. This Geobacter sulfurreducens (strain ATCC 51573 / DSM 12127 / PCA) protein is Small ribosomal subunit protein bS20.